A 909-amino-acid chain; its full sequence is Ribosome-releasing factor 2, mitochondrial (909 aa).

The transit peptide at 1–15 directs the protein to the mitochondrion; that stretch reads MVAAPLLRAHQAARL. The tr-type G domain maps to 57–367; that stretch reads DRTRNIGIIA…AVTNLLPSPP (311 aa). 66-73 is a binding site for GTP; that stretch reads AHIDAGKT. The segment at 121–148 is disordered; the sequence is WPPQTAGDGNTTPQEPQTPRSASSHTVN. Polar residues predominate over residues 127–148; sequence GDGNTTPQEPQTPRSASSHTVN. Residues 151–155 and 205–208 contribute to the GTP site; these read DTPGH and NKLD.

Belongs to the TRAFAC class translation factor GTPase superfamily. Classic translation factor GTPase family. EF-G/EF-2 subfamily.

It is found in the mitochondrion. Mitochondrial GTPase that mediates the disassembly of ribosomes from messenger RNA at the termination of mitochondrial protein biosynthesis. Not involved in the GTP-dependent ribosomal translocation step during translation elongation. This is Ribosome-releasing factor 2, mitochondrial (mef2) from Aspergillus flavus (strain ATCC 200026 / FGSC A1120 / IAM 13836 / NRRL 3357 / JCM 12722 / SRRC 167).